A 232-amino-acid chain; its full sequence is Succinyl-CoA:3-ketoacid coenzyme A transferase subunit A (232 aa).

Position 24–30 (24–30 (GGFGLCG)) interacts with CoA.

The protein belongs to the 3-oxoacid CoA-transferase subunit A family. As to quaternary structure, heterodimer of a subunit A and a subunit B.

It carries out the reaction a 3-oxo acid + succinyl-CoA = a 3-oxoacyl-CoA + succinate. This Helicobacter pylori (strain J99 / ATCC 700824) (Campylobacter pylori J99) protein is Succinyl-CoA:3-ketoacid coenzyme A transferase subunit A (scoA).